Consider the following 203-residue polypeptide: ATP-dependent Clp protease proteolytic subunit 2 (203 aa).

Residue S98 is the Nucleophile of the active site. The active site involves H123.

Belongs to the peptidase S14 family. As to quaternary structure, fourteen ClpP subunits assemble into 2 heptameric rings which stack back to back to give a disk-like structure with a central cavity, resembling the structure of eukaryotic proteasomes.

It localises to the cytoplasm. The catalysed reaction is Hydrolysis of proteins to small peptides in the presence of ATP and magnesium. alpha-casein is the usual test substrate. In the absence of ATP, only oligopeptides shorter than five residues are hydrolyzed (such as succinyl-Leu-Tyr-|-NHMec, and Leu-Tyr-Leu-|-Tyr-Trp, in which cleavage of the -Tyr-|-Leu- and -Tyr-|-Trp bonds also occurs).. Its function is as follows. Cleaves peptides in various proteins in a process that requires ATP hydrolysis. Has a chymotrypsin-like activity. Plays a major role in the degradation of misfolded proteins. The polypeptide is ATP-dependent Clp protease proteolytic subunit 2 (Chlamydia muridarum (strain MoPn / Nigg)).